The sequence spans 275 residues: MAIKKIGISARCDRPEIIGKVREILAHFSSRVQIFVATPTAEVLGMEGTPVERMREEGVELIISVGGDGTVLRNIAKMKDPLPILGINMGTLGFLVDVEPEDALETIEEVLYGFSYSDRMRVDVFLNGEMLETATNEIAIMSAKPAKIIQFEVYVGDCLLDSMRADGVVFATPTGSTAYAMSAGGPIISPRVNAIVVVPVAPFKLSSRPWVIPSDSEITIRLSAPKKEAVIAIDGQKSYRIKLDDVVKLKKSRFPARFVRISDTCFYERVQRKLT.

Residue aspartate 68 is the Proton acceptor of the active site. Residues aspartate 68–glycine 69, arginine 73, asparagine 136–glutamate 137, lysine 147, arginine 164, aspartate 166, threonine 177–serine 182, alanine 201, and glutamine 236 each bind NAD(+).

The protein belongs to the NAD kinase family. Requires a divalent metal cation as cofactor.

It localises to the cytoplasm. The catalysed reaction is NAD(+) + ATP = ADP + NADP(+) + H(+). Its function is as follows. Involved in the regulation of the intracellular balance of NAD and NADP, and is a key enzyme in the biosynthesis of NADP. Catalyzes specifically the phosphorylation on 2'-hydroxyl of the adenosine moiety of NAD to yield NADP. The protein is NAD kinase of Methanosarcina barkeri (strain Fusaro / DSM 804).